Reading from the N-terminus, the 258-residue chain is Hydroxyacylglutathione hydrolase (258 aa).

Residues H56, H58, D60, H61, H112, D132, and H170 each coordinate Zn(2+).

It belongs to the metallo-beta-lactamase superfamily. Glyoxalase II family. Monomer. Requires Zn(2+) as cofactor.

The enzyme catalyses an S-(2-hydroxyacyl)glutathione + H2O = a 2-hydroxy carboxylate + glutathione + H(+). It functions in the pathway secondary metabolite metabolism; methylglyoxal degradation; (R)-lactate from methylglyoxal: step 2/2. Its function is as follows. Thiolesterase that catalyzes the hydrolysis of S-D-lactoyl-glutathione to form glutathione and D-lactic acid. The sequence is that of Hydroxyacylglutathione hydrolase from Pseudomonas aeruginosa (strain ATCC 15692 / DSM 22644 / CIP 104116 / JCM 14847 / LMG 12228 / 1C / PRS 101 / PAO1).